Here is a 711-residue protein sequence, read N- to C-terminus: Ribosomal RNA large subunit methyltransferase K/L (711 aa).

The THUMP domain occupies 43–154 (LGYRITLWSR…RGQITIGLNF (112 aa)).

The protein belongs to the methyltransferase superfamily. RlmKL family.

The protein resides in the cytoplasm. The enzyme catalyses guanosine(2445) in 23S rRNA + S-adenosyl-L-methionine = N(2)-methylguanosine(2445) in 23S rRNA + S-adenosyl-L-homocysteine + H(+). It carries out the reaction guanosine(2069) in 23S rRNA + S-adenosyl-L-methionine = N(2)-methylguanosine(2069) in 23S rRNA + S-adenosyl-L-homocysteine + H(+). Specifically methylates the guanine in position 2445 (m2G2445) and the guanine in position 2069 (m7G2069) of 23S rRNA. The protein is Ribosomal RNA large subunit methyltransferase K/L of Shewanella woodyi (strain ATCC 51908 / MS32).